The chain runs to 84 residues: Small ribosomal subunit protein uS17 (84 aa).

Belongs to the universal ribosomal protein uS17 family. Part of the 30S ribosomal subunit.

Functionally, one of the primary rRNA binding proteins, it binds specifically to the 5'-end of 16S ribosomal RNA. The chain is Small ribosomal subunit protein uS17 from Clostridium acetobutylicum (strain ATCC 824 / DSM 792 / JCM 1419 / IAM 19013 / LMG 5710 / NBRC 13948 / NRRL B-527 / VKM B-1787 / 2291 / W).